The chain runs to 259 residues: 5'-nucleotidase SurE (259 aa).

Asp-13, Asp-14, Ser-44, and Asn-100 together coordinate a divalent metal cation.

It belongs to the SurE nucleotidase family. Requires a divalent metal cation as cofactor.

It is found in the cytoplasm. The enzyme catalyses a ribonucleoside 5'-phosphate + H2O = a ribonucleoside + phosphate. In terms of biological role, nucleotidase that shows phosphatase activity on nucleoside 5'-monophosphates. The sequence is that of 5'-nucleotidase SurE from Bacteroides thetaiotaomicron (strain ATCC 29148 / DSM 2079 / JCM 5827 / CCUG 10774 / NCTC 10582 / VPI-5482 / E50).